A 601-amino-acid polypeptide reads, in one-letter code: Putative pentatricopeptide repeat-containing protein At3g25060, mitochondrial (601 aa).

The N-terminal 80 residues, 1 to 80 (MVQTKHFCML…KVFDELPQRG (80 aa)), are a transit peptide targeting the mitochondrion. PPR repeat units lie at residues 49–79 (GSSI…LPQR), 80–114 (GVSV…KIQP), 115–149 (DSST…GYKN), 150–180 (DVFV…MAKR), 181–215 (DVIC…GFGR), 216–250 (DRVV…GLPM), 251–281 (NVVV…MMFK), 282–316 (TAVS…GFQP), 317–347 (DLVT…ILKR), 351–381 (DRVT…VGRK), 382–416 (DLVC…NIEP), 417–452 (DHAT…KIQP), and 453–487 (SEKH…NALP). Residues 488 to 563 (IWVALLSGCI…VPGYSAIEVN (76 aa)) form a type E motif region. Positions 564-594 (GELRTFLMEDLSHHEHYHMLQVLRNLKTEIR) are type E(+) motif.

This sequence belongs to the PPR family. PCMP-E subfamily.

Its subcellular location is the mitochondrion. In Arabidopsis thaliana (Mouse-ear cress), this protein is Putative pentatricopeptide repeat-containing protein At3g25060, mitochondrial (PCMP-E96).